The primary structure comprises 671 residues: UvrABC system protein B (671 aa).

The Helicase ATP-binding domain maps to 31–189 (KGFEEGKKEQ…QLVDIQFDRN (159 aa)). 44-51 (GATGTGKT) is an ATP binding site. The Beta-hairpin signature appears at 97-120 (YYDYYQPEAYVPSTDTYIEKDSAI). The region spanning 437 to 599 (QIDDLVGEIN…ITPKTIIKPI (163 aa)) is the Helicase C-terminal domain. The region spanning 634–669 (KELVANLRSQMQAAAKKLDFEQAASLRDTILELQAD) is the UVR domain.

This sequence belongs to the UvrB family. As to quaternary structure, forms a heterotetramer with UvrA during the search for lesions. Interacts with UvrC in an incision complex.

It localises to the cytoplasm. Its function is as follows. The UvrABC repair system catalyzes the recognition and processing of DNA lesions. A damage recognition complex composed of 2 UvrA and 2 UvrB subunits scans DNA for abnormalities. Upon binding of the UvrA(2)B(2) complex to a putative damaged site, the DNA wraps around one UvrB monomer. DNA wrap is dependent on ATP binding by UvrB and probably causes local melting of the DNA helix, facilitating insertion of UvrB beta-hairpin between the DNA strands. Then UvrB probes one DNA strand for the presence of a lesion. If a lesion is found the UvrA subunits dissociate and the UvrB-DNA preincision complex is formed. This complex is subsequently bound by UvrC and the second UvrB is released. If no lesion is found, the DNA wraps around the other UvrB subunit that will check the other stand for damage. This chain is UvrABC system protein B, found in Lacticaseibacillus casei (strain BL23) (Lactobacillus casei).